Consider the following 564-residue polypeptide: Dihydropyrimidinase-related protein 5 (564 aa).

Residues threonine 509 and threonine 514 each carry the phosphothreonine modification. Residues serine 532 and serine 538 each carry the phosphoserine modification. Arginine 559 carries the omega-N-methylarginine modification.

Belongs to the metallo-dependent hydrolases superfamily. Hydantoinase/dihydropyrimidinase family. In terms of assembly, homotetramer, and heterotetramer with other DPYS-like proteins. Interacts with DPYSL2, DPYSL3 and DPYSL4. Interacts with MAP2 and TUBB3.

The protein resides in the cytoplasm. Involved in the negative regulation of dendrite outgrowth. In Homo sapiens (Human), this protein is Dihydropyrimidinase-related protein 5 (DPYSL5).